A 58-amino-acid chain; its full sequence is MEKVILEHLQRIEKQLEILNSKIENFLGFEELSEEELKELDEIEAKMEKGEKFVLNDV.

Positions 3–52 (KVILEHLQRIEKQLEILNSKIENFLGFEELSEEELKELDEIEAKMEKGEK) form a coiled coil.

This is an uncharacterized protein from Archaeoglobus fulgidus (strain ATCC 49558 / DSM 4304 / JCM 9628 / NBRC 100126 / VC-16).